The chain runs to 625 residues: tRNA uridine 5-carboxymethylaminomethyl modification enzyme MnmG (625 aa).

FAD-binding positions include 13–18 (GGGHAG), V125, and S182. Position 276–290 (276–290 (GPRYCPSIEDKITRF)) interacts with NAD(+). Q373 is an FAD binding site.

Belongs to the MnmG family. Homodimer. Heterotetramer of two MnmE and two MnmG subunits. Requires FAD as cofactor.

The protein resides in the cytoplasm. In terms of biological role, NAD-binding protein involved in the addition of a carboxymethylaminomethyl (cmnm) group at the wobble position (U34) of certain tRNAs, forming tRNA-cmnm(5)s(2)U34. The chain is tRNA uridine 5-carboxymethylaminomethyl modification enzyme MnmG from Lactococcus lactis subsp. cremoris (strain MG1363).